The chain runs to 673 residues: Thimet-like oligopeptidase (673 aa).

Histidine 465 is a binding site for Zn(2+). The active site involves glutamate 466. The Zn(2+) site is built by histidine 469 and histidine 472.

It belongs to the peptidase M3 family. The cofactor is Zn(2+).

This is Thimet-like oligopeptidase from Dictyostelium discoideum (Social amoeba).